A 623-amino-acid polypeptide reads, in one-letter code: Membrane protein insertase YidC (623 aa).

The next 5 membrane-spanning stretches (helical) occupy residues 8 to 28 (LILATGLSFLVIMVWFFLFPP), 379 to 399 (MGLAIIALTFLLKALVLPLAY), 449 to 469 (LPILIQIPIFFSLYKVIFVTI), 507 to 527 (TTMALIFIGALPILLGVSMWL), and 543 to 563 (IFAWMPWVFMFMLGHFASGLV). Residues 601 to 617 (KPAAQPAGKAANDGAAP) show a composition bias toward low complexity. A disordered region spans residues 601–623 (KPAAQPAGKAANDGAAPAKKRKP).

The protein belongs to the OXA1/ALB3/YidC family. Type 1 subfamily. Interacts with the Sec translocase complex via SecD. Specifically interacts with transmembrane segments of nascent integral membrane proteins during membrane integration.

The protein localises to the cell inner membrane. Its function is as follows. Required for the insertion and/or proper folding and/or complex formation of integral membrane proteins into the membrane. Involved in integration of membrane proteins that insert both dependently and independently of the Sec translocase complex, as well as at least some lipoproteins. Aids folding of multispanning membrane proteins. This chain is Membrane protein insertase YidC, found in Cereibacter sphaeroides (strain ATCC 17029 / ATH 2.4.9) (Rhodobacter sphaeroides).